The sequence spans 703 residues: Pinin (703 aa).

Alanine 2 is subject to N-acetylalanine. Residues 2-32 (AVAVRTLQEQLEKAKESLKNVDENIRKLTGR) adopt a coiled-coil conformation. A disordered region spans residues 46–148 (ALSGPGGGRG…ETPERPGPIF (103 aa)). A Phosphoserine modification is found at serine 48. Residue arginine 54 is modified to Omega-N-methylarginine. Residues serine 58, serine 66, serine 96, and serine 100 each carry the phosphoserine modification. A compositionally biased stretch (basic and acidic residues) spans 87 to 100 (GGERRTRRESRQES). Lysine 109 participates in a covalent cross-link: Glycyl lysine isopeptide (Lys-Gly) (interchain with G-Cter in SUMO2). 2 positions are modified to phosphoserine: serine 114 and serine 115. A Glycyl lysine isopeptide (Lys-Gly) (interchain with G-Cter in SUMO2) cross-link involves residue lysine 121. Threonine 125 bears the Phosphothreonine mark. Glycyl lysine isopeptide (Lys-Gly) (interchain with G-Cter in SUMO2) cross-links involve residues lysine 138 and lysine 157. Lysine 159 participates in a covalent cross-link: Glycyl lysine isopeptide (Lys-Gly) (interchain with G-Cter in SUMO1); alternate. Lysine 159 is covalently cross-linked (Glycyl lysine isopeptide (Lys-Gly) (interchain with G-Cter in SUMO2); alternate). Residues 165–236 (ATERQKRRQE…HNAKIIKYIR (72 aa)) are a coiled coil. The segment at 223-285 (EWNEHNAKII…AEQINKMEAR (63 aa)) is sufficient for PSAP complex assembly. A Glycyl lysine isopeptide (Lys-Gly) (interchain with G-Cter in SUMO2) cross-link involves residue lysine 230. An N6-acetyllysine; alternate modification is found at lysine 240. Residue lysine 240 is modified to N6-succinyllysine; alternate. Residues lysine 281, lysine 306, and lysine 313 each participate in a glycyl lysine isopeptide (Lys-Gly) (interchain with G-Cter in SUMO2) cross-link. 3 disordered regions span residues 284 to 314 (ARPRRQSMKEKEHQVVVRNEEQKSEQEEGKV), 331 to 394 (RVGT…EEVM), and 408 to 703 (AEQE…PGQL). Basic and acidic residues-rich tracts occupy residues 348–357 (EIPIVHSDAE) and 366–386 (KQEMEVKMEEETEVRESEKQQ). Serine 354 is modified (phosphoserine). The stretch at 354 to 411 (SDAEKEQEEEEQKQEMEVKMEEETEVRESEKQQDSQPEEVMDVLEMVESVKNVIAEQE) forms a coiled coil. Glycyl lysine isopeptide (Lys-Gly) (interchain with G-Cter in SUMO2) cross-links involve residues lysine 366 and lysine 372. A phosphoserine mark is found at serine 382 and serine 388. The span at 417–433 (QVERVEPSENEASKELE) shows a compositional bias: basic and acidic residues. Phosphoserine is present on residues serine 450 and serine 457. The span at 479–489 (PMAQPQAQSLP) shows a compositional bias: low complexity. Residues lysine 541 and lysine 549 each participate in a glycyl lysine isopeptide (Lys-Gly) (interchain with G-Cter in SUMO2) cross-link. Serine 565 is subject to Phosphoserine. Lysine 566 is covalently cross-linked (Glycyl lysine isopeptide (Lys-Gly) (interchain with G-Cter in SUMO2)). Positions 572–588 (RSRSRGRARNRTSKSRS) are enriched in basic residues. Residues 589-642 (RSSSSSSSSSSSTSSSSGSSSSSGSSSSRTSSSSSSTSGSSSRDSSSSTTSSSE) are compositionally biased toward low complexity. Positions 646–664 (RSRGRGHNRDRKHRRSVDR) are enriched in basic residues. Residues 665–676 (KRRDASGLERSH) are compositionally biased toward basic and acidic residues. 2 positions are modified to phosphoserine: serine 670 and serine 691.

Belongs to the pinin family. In terms of assembly, found in a mRNA splicing-dependent exon junction complex (EJC). Found in a complex with SR proteins. Found in a mRNP complex with RNPS1. Component of the PSAP complex consisting of RNPS1, SAP18 and PNN. Interacts with PNISR, CTBP1, CTBP2, KRT8, KRT18, KRT19, PS1D/PNO40, PPIG, RNPS1, SFRS4 and SRRM2. Identified in the spliceosome C complex.

It is found in the nucleus speckle. The protein resides in the cell junction. It localises to the desmosome. Transcriptional activator binding to the E-box 1 core sequence of the E-cadherin promoter gene; the core-binding sequence is 5'CAGGTG-3'. Capable of reversing CTBP1-mediated transcription repression. Auxiliary component of the splicing-dependent multiprotein exon junction complex (EJC) deposited at splice junction on mRNAs. The EJC is a dynamic structure consisting of core proteins and several peripheral nuclear and cytoplasmic associated factors that join the complex only transiently either during EJC assembly or during subsequent mRNA metabolism. Participates in the regulation of alternative pre-mRNA splicing. Associates to spliced mRNA within 60 nt upstream of the 5'-splice sites. Component of the PSAP complex which binds RNA in a sequence-independent manner and is proposed to be recruited to the EJC prior to or during the splicing process and to regulate specific excision of introns in specific transcription subsets. Involved in the establishment and maintenance of epithelia cell-cell adhesion. The protein is Pinin (PNN) of Bos taurus (Bovine).